Reading from the N-terminus, the 141-residue chain is Large ribosomal subunit protein uL11 (141 aa).

The protein belongs to the universal ribosomal protein uL11 family. As to quaternary structure, part of the ribosomal stalk of the 50S ribosomal subunit. Interacts with L10 and the large rRNA to form the base of the stalk. L10 forms an elongated spine to which L12 dimers bind in a sequential fashion forming a multimeric L10(L12)X complex. One or more lysine residues are methylated.

Forms part of the ribosomal stalk which helps the ribosome interact with GTP-bound translation factors. The polypeptide is Large ribosomal subunit protein uL11 (Helicobacter hepaticus (strain ATCC 51449 / 3B1)).